Consider the following 551-residue polypeptide: Chaperonin GroEL (551 aa).

Residues T29–P32, K50, D86–T90, G414, N478–A480, and D494 contribute to the ATP site.

This sequence belongs to the chaperonin (HSP60) family. Forms a cylinder of 14 subunits composed of two heptameric rings stacked back-to-back. Interacts with the co-chaperonin GroES.

It localises to the cytoplasm. It carries out the reaction ATP + H2O + a folded polypeptide = ADP + phosphate + an unfolded polypeptide.. In terms of biological role, together with its co-chaperonin GroES, plays an essential role in assisting protein folding. The GroEL-GroES system forms a nano-cage that allows encapsulation of the non-native substrate proteins and provides a physical environment optimized to promote and accelerate protein folding. The protein is Chaperonin GroEL of Legionella jeonii.